The primary structure comprises 563 residues: Chaperonin GroEL 1 (563 aa).

Residues 29 to 32, 86 to 90, G413, 476 to 478, and D492 contribute to the ATP site; these read TIGP, DGTTT, and NAA. The segment at 520-545 is disordered; the sequence is DKPEPPSPAGGEGGGDPMGGMGGMGG. The span at 529–545 shows a compositional bias: gly residues; the sequence is GGEGGGDPMGGMGGMGG.

The protein belongs to the chaperonin (HSP60) family. In terms of assembly, forms a cylinder of 14 subunits composed of two heptameric rings stacked back-to-back. Interacts with the co-chaperonin GroES.

The protein localises to the cytoplasm. The enzyme catalyses ATP + H2O + a folded polypeptide = ADP + phosphate + an unfolded polypeptide.. Functionally, together with its co-chaperonin GroES, plays an essential role in assisting protein folding. The GroEL-GroES system forms a nano-cage that allows encapsulation of the non-native substrate proteins and provides a physical environment optimized to promote and accelerate protein folding. The polypeptide is Chaperonin GroEL 1 (Prochlorococcus marinus (strain SARG / CCMP1375 / SS120)).